A 592-amino-acid polypeptide reads, in one-letter code: Delta-like protein 3 (592 aa).

The signal sequence occupies residues 1–32; the sequence is MVSLQVSPLSQTLILAFLLPQALPAGVFELQI. Residues 33 to 490 lie on the Extracellular side of the membrane; that stretch reads HSFGPGPGLG…LRQADPQRFL (458 aa). The DSL domain occupies 174–213; it reads ARCEPPAVGAACARLCRSRSAPSRCGPGLRPCTPFPDECE. EGF-like domains lie at 214–247, 272–308, 310–349, 351–387, 389–425, and 427–463; these read APSV…PLCT, GPGP…LRCE, SGVT…SNCE, RVDR…PRCE, DLDD…RDCR, and RADP…VRCE. Intrachain disulfides connect Cys218/Cys229, Cys222/Cys235, Cys237/Cys246, Cys276/Cys287, Cys281/Cys296, Cys298/Cys307, Cys314/Cys325, Cys319/Cys337, Cys339/Cys348, Cys355/Cys366, Cys360/Cys375, Cys377/Cys386, Cys393/Cys404, Cys398/Cys413, Cys415/Cys424, Cys431/Cys442, Cys436/Cys451, and Cys453/Cys462. A helical membrane pass occupies residues 491–511; the sequence is LPPALGLLVAAGLAGAALLVI. At 512 to 592 the chain is on the cytoplasmic side; that stretch reads HVRRRGPGQD…REDWLIQVLF (81 aa). The tract at residues 548 to 567 is disordered; that stretch reads QDGAGDGPSSSADWNHPEDG.

In terms of assembly, can bind and activate Notch-1 or another Notch receptor. In terms of processing, ubiquitinated by MIB (MIB1 or MIB2), leading to its endocytosis and subsequent degradation. As to expression, predominantly expressed in the neuroectoderm and paraxial mesoderm during embryogenesis.

It is found in the membrane. Its function is as follows. Inhibits primary neurogenesis. May be required to divert neurons along a specific differentiation pathway. Plays a role in the formation of somite boundaries during segmentation of the paraxial mesoderm. This chain is Delta-like protein 3 (Dll3), found in Mus musculus (Mouse).